Here is a 589-residue protein sequence, read N- to C-terminus: Glutamine--fructose-6-phosphate aminotransferase [isomerizing] (589 aa).

Cys-2 functions as the Nucleophile; for GATase activity in the catalytic mechanism. The Glutamine amidotransferase type-2 domain occupies 2-221 (CGIIGIVSLR…DDELGFITPE (220 aa)). SIS domains lie at 286–426 (VIEE…KMEK) and 445–579 (IGEE…PDKP). Catalysis depends on Lys-584, which acts as the For Fru-6P isomerization activity.

In terms of assembly, homodimer.

It localises to the cytoplasm. The catalysed reaction is D-fructose 6-phosphate + L-glutamine = D-glucosamine 6-phosphate + L-glutamate. Its function is as follows. Catalyzes the first step in hexosamine metabolism, converting fructose-6P into glucosamine-6P using glutamine as a nitrogen source. In Sulfurisphaera tokodaii (strain DSM 16993 / JCM 10545 / NBRC 100140 / 7) (Sulfolobus tokodaii), this protein is Glutamine--fructose-6-phosphate aminotransferase [isomerizing].